The following is a 759-amino-acid chain: Spindle pole body component alp16 (759 aa).

In terms of assembly, interacts with gamma-tubulin.

The protein localises to the cytoplasm. It is found in the cytoskeleton. The protein resides in the microtubule organizing center. It localises to the spindle pole body. Its function is as follows. Component of the gamma tubule complex that is required for the regulation of both interphase microtubules and mitotic bipolar spindles. The protein is Spindle pole body component alp16 (alp16) of Schizosaccharomyces pombe (strain 972 / ATCC 24843) (Fission yeast).